The chain runs to 1070 residues: DNA-directed RNA polymerase subunit beta (1070 aa).

Belongs to the RNA polymerase beta chain family. In plastids the minimal PEP RNA polymerase catalytic core is composed of four subunits: alpha, beta, beta', and beta''. When a (nuclear-encoded) sigma factor is associated with the core the holoenzyme is formed, which can initiate transcription.

It localises to the plastid. It is found in the chloroplast. The catalysed reaction is RNA(n) + a ribonucleoside 5'-triphosphate = RNA(n+1) + diphosphate. Functionally, DNA-dependent RNA polymerase catalyzes the transcription of DNA into RNA using the four ribonucleoside triphosphates as substrates. The protein is DNA-directed RNA polymerase subunit beta of Lotus japonicus (Lotus corniculatus var. japonicus).